Here is an 887-residue protein sequence, read N- to C-terminus: Pyruvate dehydrogenase E1 component (887 aa).

Homodimer. Part of the PDH complex, consisting of multiple copies of pyruvate dehydrogenase (E1), dihydrolipoamide acetyltransferase (E2) and lipoamide dehydrogenase (E3). It depends on thiamine diphosphate as a cofactor.

It catalyses the reaction N(6)-[(R)-lipoyl]-L-lysyl-[protein] + pyruvate + H(+) = N(6)-[(R)-S(8)-acetyldihydrolipoyl]-L-lysyl-[protein] + CO2. Component of the pyruvate dehydrogenase (PDH) complex, that catalyzes the overall conversion of pyruvate to acetyl-CoA and CO(2). This Buchnera aphidicola subsp. Baizongia pistaciae (strain Bp) protein is Pyruvate dehydrogenase E1 component (aceE).